We begin with the raw amino-acid sequence, 130 residues long: Small ribosomal subunit protein uS11 (130 aa).

The protein belongs to the universal ribosomal protein uS11 family. In terms of assembly, part of the 30S ribosomal subunit. Interacts with proteins S7 and S18. Binds to IF-3.

In terms of biological role, located on the platform of the 30S subunit, it bridges several disparate RNA helices of the 16S rRNA. Forms part of the Shine-Dalgarno cleft in the 70S ribosome. In Xylella fastidiosa (strain M12), this protein is Small ribosomal subunit protein uS11.